The chain runs to 196 residues: Imidazoleglycerol-phosphate dehydratase (196 aa).

The protein belongs to the imidazoleglycerol-phosphate dehydratase family.

The protein resides in the cytoplasm. The catalysed reaction is D-erythro-1-(imidazol-4-yl)glycerol 3-phosphate = 3-(imidazol-4-yl)-2-oxopropyl phosphate + H2O. The protein operates within amino-acid biosynthesis; L-histidine biosynthesis; L-histidine from 5-phospho-alpha-D-ribose 1-diphosphate: step 6/9. This chain is Imidazoleglycerol-phosphate dehydratase, found in Ralstonia pickettii (strain 12J).